The following is a 115-amino-acid chain: Phosphorelay protein LuxU (115 aa).

The HPt domain maps to Gly-17–Tyr-107. His-56 is subject to Phosphohistidine.

In terms of assembly, monomer.

Functionally, phosphorelay protein which receives a sensory signal from a sensor kinase and transmit it to LuxO. At low cell density, a phosphoryl group is transferred from the sensor kinase, probably on His-56 and this phosphoryl group is further transferred to LuxO. This Vibrio vulnificus (strain CMCP6) protein is Phosphorelay protein LuxU (luxU).